Reading from the N-terminus, the 2138-residue chain is Conidial yellow pigment biosynthesis polyketide synthase melA (2138 aa).

An N-terminal acylcarrier protein transacylase domain (SAT) region spans residues 8 to 244 (YLFGDQTADF…TRVPIHGPYH (237 aa)). The 432-residue stretch at 373-804 (QSKIAIIGLS…GGNTALMVED (432 aa)) folds into the Ketosynthase family 3 (KS3) domain. Active-site for beta-ketoacyl synthase activity residues include Cys545, His680, and His722. The tract at residues 910 to 1229 (FVFTGQGAQY…VSALYMAGIE (320 aa)) is malonyl-CoA:ACP transacylase (MAT) domain. The active-site For acyl/malonyl transferase activity is the Ser999. The interval 1288–1601 (SSAAQRVLET…RKILDMALPP (314 aa)) is product template (PT) domain. Residues 1292–1423 (QRVLETSGDN…CNIKFFDPSP (132 aa)) form an N-terminal hotdog fold region. Residues 1292 to 1596 (QRVLETSGDN…FQGLARKILD (305 aa)) form the PKS/mFAS DH domain. His1324 functions as the Proton acceptor; for dehydratase activity in the catalytic mechanism. A C-terminal hotdog fold region spans residues 1451–1596 (AHRMKRGMVY…FQGLARKILD (146 aa)). The active-site Proton donor; for dehydratase activity is Asp1509. Residues 1640–1714 (PSMATRALAI…DFKHLLAQMG (75 aa)) form the Carrier 1 domain. Ser1674 is modified (O-(pantetheine 4'-phosphoryl)serine). Residues 1712–1758 (QMGPGESSDGSSSEGDMSSAASSTDLSSPNTSGLPTPANEKSMTHGL) form a disordered region. Over residues 1713–1739 (MGPGESSDGSSSEGDMSSAASSTDLSS) the composition is skewed to low complexity. Positions 1740–1758 (PNTSGLPTPANEKSMTHGL) are enriched in polar residues. The Carrier 2 domain maps to 1759–1836 (QGQNDSMRQI…DIETTLDLKP (78 aa)). O-(pantetheine 4'-phosphoryl)serine is present on Ser1796. Residues 1863 to 2135 (TQHPPATSIL…ELARFIANSM (273 aa)) form a claisen cyclase domain region. Ser1953 functions as the For Claisen cyclase activity in the catalytic mechanism.

The catalysed reaction is 6 malonyl-CoA + acetyl-CoA + 6 H(+) = naphtopyrone YWA1 + 6 CO2 + 7 CoA + H2O. It functions in the pathway pigment biosynthesis. Its pathway is polyketide biosynthesis; heptaketide naphthopyrone YWA1 biosynthesis. Its function is as follows. Non-reducing polyketide synthase involved in the biosynthesis of a yellow conidial pigment. Probably forms the heptaketide naphthopyrene YWA1 via condensation of acetate units. In Penicillium expansum (Blue mold rot fungus), this protein is Conidial yellow pigment biosynthesis polyketide synthase melA.